We begin with the raw amino-acid sequence, 252 residues long: Ribosomal RNA small subunit methyltransferase J (252 aa).

S-adenosyl-L-methionine contacts are provided by residues 101 to 102, 117 to 118, 153 to 154, and Asp171; these read RD, ER, and SS.

It belongs to the methyltransferase superfamily. RsmJ family.

The protein localises to the cytoplasm. The enzyme catalyses guanosine(1516) in 16S rRNA + S-adenosyl-L-methionine = N(2)-methylguanosine(1516) in 16S rRNA + S-adenosyl-L-homocysteine + H(+). Specifically methylates the guanosine in position 1516 of 16S rRNA. The chain is Ribosomal RNA small subunit methyltransferase J from Salmonella paratyphi B (strain ATCC BAA-1250 / SPB7).